A 702-amino-acid chain; its full sequence is Ribosomal RNA large subunit methyltransferase K/L (702 aa).

The THUMP domain occupies 43 to 154 (LVYQSLMWSR…KETASIALDL (112 aa)).

Belongs to the methyltransferase superfamily. RlmKL family.

The protein resides in the cytoplasm. It carries out the reaction guanosine(2445) in 23S rRNA + S-adenosyl-L-methionine = N(2)-methylguanosine(2445) in 23S rRNA + S-adenosyl-L-homocysteine + H(+). The enzyme catalyses guanosine(2069) in 23S rRNA + S-adenosyl-L-methionine = N(2)-methylguanosine(2069) in 23S rRNA + S-adenosyl-L-homocysteine + H(+). In terms of biological role, specifically methylates the guanine in position 2445 (m2G2445) and the guanine in position 2069 (m7G2069) of 23S rRNA. The polypeptide is Ribosomal RNA large subunit methyltransferase K/L (Escherichia coli (strain SMS-3-5 / SECEC)).